Consider the following 235-residue polypeptide: MLLTDAYEIAKFIKDAKKQTPVKLYVNGDLAGLTIEGATAFGTDQSKIFFADAGLASTFLEEYADRITEVHVEYDRRNSAVPMLDTRHLNARIEPGSWIRDHVVIGDNAVIMMGAIINIGASIGDGTMIDMNAVVGARGTIGKNVHVGAGAVVAGVLEPPSKTPVIIEDGVLIGANAVILEGVRVGKDAVVAAGSVVTEDVPAGSVVAGTPARVIKQKDEKTAEKTQLVDDLRSL.

Belongs to the transferase hexapeptide repeat family. DapH subfamily.

It carries out the reaction (S)-2,3,4,5-tetrahydrodipicolinate + acetyl-CoA + H2O = L-2-acetamido-6-oxoheptanedioate + CoA. The protein operates within amino-acid biosynthesis; L-lysine biosynthesis via DAP pathway; LL-2,6-diaminopimelate from (S)-tetrahydrodipicolinate (acetylase route): step 1/3. In terms of biological role, catalyzes the transfer of an acetyl group from acetyl-CoA to tetrahydrodipicolinate. This is 2,3,4,5-tetrahydropyridine-2,6-dicarboxylate N-acetyltransferase from Exiguobacterium sibiricum (strain DSM 17290 / CCUG 55495 / CIP 109462 / JCM 13490 / 255-15).